We begin with the raw amino-acid sequence, 663 residues long: Zeaxanthin epoxidase, chloroplastic (663 aa).

The N-terminal 50 residues, 1–50 (MYSTVFYTSVHPSTSAFSRKQLPLLISKDFPTELYHSLPCSRSLENGQIK), are a transit peptide targeting the chloroplast. FAD is bound by residues 81–109 (KVLV…LVFE) and 359–372 (TFSW…LLGD). One can recognise an FHA domain in the interval 547–611 (LVLSRDENMP…HGTWITDNEG (65 aa)).

It depends on FAD as a cofactor. In terms of tissue distribution, higher expression in leaves than in roots.

Its subcellular location is the plastid. It localises to the chloroplast membrane. It is found in the chloroplast thylakoid membrane. It carries out the reaction all-trans-zeaxanthin + 4 reduced [2Fe-2S]-[ferredoxin] + 2 O2 + 4 H(+) = all-trans-violaxanthin + 4 oxidized [2Fe-2S]-[ferredoxin] + 2 H2O. Its pathway is plant hormone biosynthesis; abscisate biosynthesis. Converts zeaxanthin into antheraxanthin and subsequently violaxanthin. Involved in the epoxidation of zeaxanthin. Plays an important role in resistance to stresses, seed development and dormancy. The chain is Zeaxanthin epoxidase, chloroplastic (ABA2) from Nicotiana plumbaginifolia (Leadwort-leaved tobacco).